A 238-amino-acid chain; its full sequence is Orotidine 5'-phosphate decarboxylase (238 aa).

Substrate-binding positions include D10, K32, 59–68 (DLKLHDIPNT), T122, R184, Q193, G213, and R214. The Proton donor role is filled by K61.

This sequence belongs to the OMP decarboxylase family. Type 1 subfamily. In terms of assembly, homodimer.

The enzyme catalyses orotidine 5'-phosphate + H(+) = UMP + CO2. It functions in the pathway pyrimidine metabolism; UMP biosynthesis via de novo pathway; UMP from orotate: step 2/2. In terms of biological role, catalyzes the decarboxylation of orotidine 5'-monophosphate (OMP) to uridine 5'-monophosphate (UMP). The sequence is that of Orotidine 5'-phosphate decarboxylase from Bacillus cereus (strain ATCC 10987 / NRS 248).